A 1257-amino-acid chain; its full sequence is Period circadian protein homolog 2 (1257 aa).

Positions 1 to 59 are disordered; sequence MNGYVDFSPSPTSPTQEPGEPQPTQAVLQEDVDMSSGSSGNENCSTGRDSQGSDCDDSG. Over residues 8–25 the composition is skewed to low complexity; that stretch reads SPSPTSPTQEPGEPQPTQ. Over residues 35-53 the composition is skewed to polar residues; sequence SSGSSGNENCSTGRDSQGS. Positions 109-118 match the Nuclear export signal 1 motif; sequence LIRTLRELKV. Residues 179–246 form the PAS 1 domain; it reads ITSEYIVKNS…FHSYTTPYKL (68 aa). The short motif at 306–310 is the LXXLL element; the sequence is LCCLL. Residues 319-385 form the PAS 2 domain; the sequence is YEAPRIPPEK…MLAIHKKILQ (67 aa). A PAC domain is found at 393 to 436; the sequence is YSPIRFRTRNGEYITLDTSWSSFINPWSRKISFIIGRHKVRVGP. Positions 460–469 match the Nuclear export signal 2 motif; it reads LTEQIHRLLM. The segment at 471 to 567 is disordered; that stretch reads PVPHSGSSGY…RDSSGASLPK (97 aa). The interval 478 to 482 is important for protein stability; the sequence is SGYGS. Composition is skewed to polar residues over residues 493–504 and 518–528; these read MSQTSSSDSNGQ and SGKSQSKSHFS. The CSNK1E binding domain stretch occupies residues 510–709; the sequence is RRSGIFKTSG…DAAGGLSQEK (200 aa). S525, S528, S531, S538, and S544 each carry phosphoserine. Positions 541–555 are enriched in polar residues; it reads EMQSSPPAQVRSVTT. Position 554 is a phosphothreonine (T554). 6 positions are modified to phosphoserine: S659, S693, S697, S706, S758, and S763. Disordered regions lie at residues 678 to 706 and 757 to 833; these read DKKP…GGLS and RSRA…CPSA. The Nuclear localization signal signature appears at 778-794; that stretch reads KKTGKNRKLKSKRVKTR. The span at 779–792 shows a compositional bias: basic residues; the sequence is KTGKNRKLKSKRVK. A compositionally biased stretch (low complexity) spans 821 to 832; it reads SPSDTSQSSCPS. Phosphothreonine is present on T858. An interaction with PPARG region spans residues 882 to 1067; sequence EFAVQPLPFA…DLCSATGSAL (186 aa). Position 939 is a phosphoserine (S939). Phosphothreonine is present on T964. S971 is subject to Phosphoserine. Residues 983–990 carry the Nuclear export signal 3 motif; the sequence is LQLNLLQL. The disordered stretch occupies residues 993–1044; the sequence is APESSTGAAGTLGTTGTAASGLDCTSGASRDRQPKAPPTCSEPSDTQNSDAI. The segment covering 996 to 1014 has biased composition (low complexity); that stretch reads SSTGAAGTLGTTGTAASGL. A compositionally biased stretch (polar residues) spans 1033–1044; the sequence is SEPSDTQNSDAI. Residues 1051 to 1055 carry the LXXLL motif; the sequence is LNLLL. Over residues 1070–1089 the composition is skewed to low complexity; that stretch reads SGASATSDSLGSSSLGCDTS. The interval 1070 to 1108 is disordered; sequence SGASATSDSLGSSSLGCDTSRSGAGSSDTSHTSKYFGSI. The segment covering 1090–1108 has biased composition (polar residues); sequence RSGAGSSDTSHTSKYFGSI. S1126 bears the Phosphoserine mark. A CRY binding domain region spans residues 1157–1257; sequence SRDLQAVLKE…LANPRKEAQT (101 aa). The segment at 1226 to 1257 is disordered; sequence EEDSPSLGLCDTSEAKEEESGQLANPRKEAQT.

In terms of assembly, homodimer. Component of the circadian core oscillator, which includes the CRY proteins, CLOCK or NPAS2, BMAL1 or BMAL2, CSNK1D and/or CSNK1E, TIMELESS, and the PER proteins. Interacts with CLOCK-BMAL1 (off DNA). Interacts directly with PER1 and PER3, and through a C-terminal domain, with CRY1 and CRY2. Interacts (via PAS 2 domain) with TIMELESS. Interacts with NFIL3. Different large complexes have been identified with different repressive functions. The core of PER complexes is composed of at least PER1, PER2, PER3, CRY1, CRY2, CSNK1D and/or CSNK1E. The large PER complex involved in the repression of transcriptional termination is composed of at least PER2, CDK9, DDX5, DHX9, NCBP1 and POLR2A (active). The large PER complex involved in the histone deacetylation is composed of at least HDAC1, PER2, SFPQ and SIN3A. The large PER complex involved in the histone methylation is composed of at least PER2, CBX3, TRIM28, SUV39H1 and/or SUV39H2; CBX3 mediates the formation of the complex. Interacts with SETX; the interaction inhibits termination of circadian target genes. Interacts with the nuclear receptors HNF4A, NR1D1, NR4A2, RORA, PPARA, PPARG and THRA; the interaction with at least PPARG is ligand dependent. Interacts with PML. Interacts (phosphorylated) with BTRC and FBXW11; the interactions trigger proteasomal degradation. Interacts with NONO and SFPQ. Interacts with CAVIN3. Interacts with MAGEL2. Interacts with MAP1LC3B. Interacts with HNF4A. Acetylated. Deacetylated by SIRT1, resulting in decreased protein stability. Deacetylated by SIRT6, preventing its degradation by the proteasome, resulting in increased protein stability. Post-translationally, phosphorylated by CSNK1E and CSNK1D. Phosphorylation results in PER2 protein degradation. May be dephosphorylated by PP1. In terms of processing, ubiquitinated, leading to its proteasomal degradation. Ubiquitination may be inhibited by CRY1. In terms of tissue distribution, expressed in all tissues examined including eye, brain, heart, lung, spleen, liver, pancreas and kidney. In the CNS, highly expressed in the SCN, internal granular layer of granular cells of the olfactory bulb, tuberculum olfactorium, piriform cortex, gyrus dentatus of the hippocampus, cerebellum, pars tuberalis/median eminence, and pituitary, and moderately in the tenia tecta, caudate putamen, accumbens nucleus, superior and inferior colliculus and pineal gland.

It localises to the nucleus. Its subcellular location is the cytoplasm. The protein resides in the perinuclear region. Functionally, transcriptional repressor which forms a core component of the circadian clock. The circadian clock, an internal time-keeping system, regulates various physiological processes through the generation of approximately 24 hour circadian rhythms in gene expression, which are translated into rhythms in metabolism and behavior. It is derived from the Latin roots 'circa' (about) and 'diem' (day) and acts as an important regulator of a wide array of physiological functions including metabolism, sleep, body temperature, blood pressure, endocrine, immune, cardiovascular, and renal function. Consists of two major components: the central clock, residing in the suprachiasmatic nucleus (SCN) of the brain, and the peripheral clocks that are present in nearly every tissue and organ system. Both the central and peripheral clocks can be reset by environmental cues, also known as Zeitgebers (German for 'timegivers'). The predominant Zeitgeber for the central clock is light, which is sensed by retina and signals directly to the SCN. The central clock entrains the peripheral clocks through neuronal and hormonal signals, body temperature and feeding-related cues, aligning all clocks with the external light/dark cycle. Circadian rhythms allow an organism to achieve temporal homeostasis with its environment at the molecular level by regulating gene expression to create a peak of protein expression once every 24 hours to control when a particular physiological process is most active with respect to the solar day. Transcription and translation of core clock components (CLOCK, NPAS2, BMAL1, BMAL2, PER1, PER2, PER3, CRY1 and CRY2) plays a critical role in rhythm generation, whereas delays imposed by post-translational modifications (PTMs) are important for determining the period (tau) of the rhythms (tau refers to the period of a rhythm and is the length, in time, of one complete cycle). A diurnal rhythm is synchronized with the day/night cycle, while the ultradian and infradian rhythms have a period shorter and longer than 24 hours, respectively. Disruptions in the circadian rhythms contribute to the pathology of cardiovascular diseases, cancer, metabolic syndrome and aging. A transcription/translation feedback loop (TTFL) forms the core of the molecular circadian clock mechanism. Transcription factors, CLOCK or NPAS2 and BMAL1 or BMAL2, form the positive limb of the feedback loop, act in the form of a heterodimer and activate the transcription of core clock genes and clock-controlled genes (involved in key metabolic processes), harboring E-box elements (5'-CACGTG-3') within their promoters. The core clock genes: PER1/2/3 and CRY1/2 which are transcriptional repressors form the negative limb of the feedback loop and interact with the CLOCK|NPAS2-BMAL1|BMAL2 heterodimer inhibiting its activity and thereby negatively regulating their own expression. This heterodimer also activates nuclear receptors NR1D1/2 and RORA/B/G, which form a second feedback loop and which activate and repress BMAL1 transcription, respectively. PER1 and PER2 proteins transport CRY1 and CRY2 into the nucleus with appropriate circadian timing, but also contribute directly to repression of clock-controlled target genes through interaction with several classes of RNA-binding proteins, helicases and others transcriptional repressors. PER appears to regulate circadian control of transcription by at least three different modes. First, interacts directly with the CLOCK-BMAL1 at the tail end of the nascent transcript peak to recruit complexes containing the SIN3-HDAC that remodel chromatin to repress transcription. Second, brings H3K9 methyltransferases such as SUV39H1 and SUV39H2 to the E-box elements of the circadian target genes, like PER2 itself or PER1. The recruitment of each repressive modifier to the DNA seems to be very precisely temporally orchestrated by the large PER complex, the deacetylases acting before than the methyltransferases. Additionally, large PER complexes are also recruited to the target genes 3' termination site through interactions with RNA-binding proteins and helicases that may play a role in transcription termination to regulate transcription independently of CLOCK-BMAL1 interactions. Recruitment of large PER complexes to the elongating polymerase at PER and CRY termination sites inhibited SETX action, impeding RNA polymerase II release and thereby repressing transcriptional reinitiation. May propagate clock information to metabolic pathways via the interaction with nuclear receptors. Coactivator of PPARA and corepressor of NR1D1, binds rhythmically at the promoter of nuclear receptors target genes like BMAL1 or G6PC1. Directly and specifically represses PPARG proadipogenic activity by blocking PPARG recruitment to target promoters and thereby transcriptional activation. Required for fatty acid and lipid metabolism, is involved as well in the regulation of circulating insulin levels. Plays an important role in the maintenance of cardiovascular functions through the regulation of NO and vasodilatatory prostaglandins production in aortas. Controls circadian glutamate uptake in synaptic vesicles through the regulation of VGLUT1 expression. May also be involved in the regulation of inflammatory processes. Represses the CLOCK-BMAL1 induced transcription of BHLHE40/DEC1 and ATF4. Negatively regulates the formation of the TIMELESS-CRY1 complex by competing with TIMELESS for binding to CRY1. The sequence is that of Period circadian protein homolog 2 from Rattus norvegicus (Rat).